Consider the following 361-residue polypeptide: DNA replication and repair protein RecF (361 aa).

30 to 37 contributes to the ATP binding site; the sequence is GDNAQGKT.

This sequence belongs to the RecF family.

It is found in the cytoplasm. The RecF protein is involved in DNA metabolism; it is required for DNA replication and normal SOS inducibility. RecF binds preferentially to single-stranded, linear DNA. It also seems to bind ATP. This Clostridium botulinum (strain Eklund 17B / Type B) protein is DNA replication and repair protein RecF.